The sequence spans 398 residues: Queuine tRNA-ribosyltransferase (398 aa).

The active-site Proton acceptor is the Asp-102. Substrate-binding positions include 102–106, Asp-156, Gln-205, and Gly-232; that span reads DSGGF. The interval 263-269 is RNA binding; sequence GVGTPED. The active-site Nucleophile is the Asp-282. The interval 287–291 is RNA binding; important for wobble base 34 recognition; the sequence is TRNAR. Residues Cys-320, Cys-322, Cys-325, and His-362 each contribute to the Zn(2+) site.

It belongs to the queuine tRNA-ribosyltransferase family. As to quaternary structure, homodimer. Within each dimer, one monomer is responsible for RNA recognition and catalysis, while the other monomer binds to the replacement base PreQ1. The cofactor is Zn(2+).

The enzyme catalyses 7-aminomethyl-7-carbaguanine + guanosine(34) in tRNA = 7-aminomethyl-7-carbaguanosine(34) in tRNA + guanine. It participates in tRNA modification; tRNA-queuosine biosynthesis. Its function is as follows. Catalyzes the base-exchange of a guanine (G) residue with the queuine precursor 7-aminomethyl-7-deazaguanine (PreQ1) at position 34 (anticodon wobble position) in tRNAs with GU(N) anticodons (tRNA-Asp, -Asn, -His and -Tyr). Catalysis occurs through a double-displacement mechanism. The nucleophile active site attacks the C1' of nucleotide 34 to detach the guanine base from the RNA, forming a covalent enzyme-RNA intermediate. The proton acceptor active site deprotonates the incoming PreQ1, allowing a nucleophilic attack on the C1' of the ribose to form the product. After dissociation, two additional enzymatic reactions on the tRNA convert PreQ1 to queuine (Q), resulting in the hypermodified nucleoside queuosine (7-(((4,5-cis-dihydroxy-2-cyclopenten-1-yl)amino)methyl)-7-deazaguanosine). The protein is Queuine tRNA-ribosyltransferase of Polaromonas sp. (strain JS666 / ATCC BAA-500).